Here is a 572-residue protein sequence, read N- to C-terminus: E3 SUMO-protein ligase PIAS2 (572 aa).

Residues 11–45 (VSSFRVSELQVLLGFAGRNKSGRKHDLLMRALHLL) form the SAP domain. The LXXLL motif motif lies at 19–23 (LQVLL). Residues Lys-46 and Lys-249 each participate in a glycyl lysine isopeptide (Lys-Gly) (interchain with G-Cter in SUMO2) cross-link. The PINIT domain maps to 134 to 299 (QPSPPIPPVH…SMSVYLVRQL (166 aa)). The SP-RING-type zinc-finger motif lies at 331 to 412 (PDSEIATTSL…FMEILNDCSD (82 aa)). Residues Cys-362, His-364, Cys-385, and Cys-388 each coordinate Zn(2+). Residues Lys-430, Lys-435, Lys-443, and Lys-452 each participate in a glycyl lysine isopeptide (Lys-Gly) (interchain with G-Cter in SUMO2) cross-link. An SUMO1-binding region spans residues 467–473 (IDVIDLT). Ser-476, Ser-477, and Ser-478 each carry phosphoserine. The Nuclear localization signal signature appears at 484 to 492 (PPAKRKCIF). Residue Lys-489 forms a Glycyl lysine isopeptide (Lys-Gly) (interchain with G-Cter in SUMO2) linkage. Ser-499 is subject to Phosphoserine. A Glycyl lysine isopeptide (Lys-Gly) (interchain with G-Cter in SUMO2) cross-link involves residue Lys-502. The segment at 523–572 (AAIPPSLTDYSVPFHHTPVSSMSSDLPGEQRRNDINNEVQLGTSSDTVQQ) is disordered. Polar residues predominate over residues 558–572 (NNEVQLGTSSDTVQQ).

This sequence belongs to the PIAS family. As to quaternary structure, binds SUMO1 and UBE2I. Interacts with AXIN1, JUN, MDM2, PARK7, TP53 and TP73 isoform alpha, but not TP73 isoform beta. Interacts with STAT4 following IL12 and IFN-alpha stimulation of T-cells. Interacts also with GTF2I, GTF2IRD1, IKFZ1, DAB2 and MSX2, as well as with several steroid receptors, including ESR1, ESR2, NR3C1, PGR, AR, and with NCOA2. Sumoylation of a target protein seems to enhance the interaction. Binds to sumoylated ELK1. Binds DNA, such as CDKN1A promoter, in a sequence-specific manner. Interacts with PLAG1. Interacts with KLF8; the interaction results in SUMO ligation and repression of KLF8 transcriptional activity and of its cell cycle progression into G(1) phase. Interacts with IFIH1/MDA5. Interacts with PML. Interacts with PRDM1. In terms of processing, sumoylated. Mainly expressed in testis.

Its subcellular location is the nucleus speckle. It localises to the nucleus. It is found in the PML body. It participates in protein modification; protein sumoylation. In terms of biological role, functions as an E3-type small ubiquitin-like modifier (SUMO) ligase, stabilizing the interaction between UBE2I and the substrate, and as a SUMO-tethering factor. Plays a crucial role as a transcriptional coregulation in various cellular pathways, including the STAT pathway, the p53 pathway and the steroid hormone signaling pathway. The effects of this transcriptional coregulation, transactivation or silencing may vary depending upon the biological context and PIAS2 isoform studied. However, it seems to be mostly involved in gene silencing. Binds to sumoylated ELK1 and enhances its transcriptional activity by preventing recruitment of HDAC2 by ELK1, thus reversing SUMO-mediated repression of ELK1 transactivation activity. Sumoylates PML at'Lys-65' and 'Lys-160'. This chain is E3 SUMO-protein ligase PIAS2 (Pias2), found in Rattus norvegicus (Rat).